Here is a 182-residue protein sequence, read N- to C-terminus: ATP-dependent protease subunit HslV (182 aa).

T6 is an active-site residue. Residues A164, C167, and T170 each contribute to the Na(+) site.

Belongs to the peptidase T1B family. HslV subfamily. In terms of assembly, a double ring-shaped homohexamer of HslV is capped on each side by a ring-shaped HslU homohexamer. The assembly of the HslU/HslV complex is dependent on binding of ATP.

It is found in the cytoplasm. The enzyme catalyses ATP-dependent cleavage of peptide bonds with broad specificity.. Its activity is regulated as follows. Allosterically activated by HslU binding. In terms of biological role, protease subunit of a proteasome-like degradation complex believed to be a general protein degrading machinery. The chain is ATP-dependent protease subunit HslV from Borrelia garinii subsp. bavariensis (strain ATCC BAA-2496 / DSM 23469 / PBi) (Borreliella bavariensis).